We begin with the raw amino-acid sequence, 342 residues long: tRNA N6-adenosine threonylcarbamoyltransferase (342 aa).

Histidine 114 and histidine 118 together coordinate Fe cation. Residues 136-140 (LVSGG), aspartate 169, glycine 182, aspartate 186, and asparagine 275 each bind substrate. A Fe cation-binding site is contributed by aspartate 301.

The protein belongs to the KAE1 / TsaD family. It depends on Fe(2+) as a cofactor.

The protein resides in the cytoplasm. The catalysed reaction is L-threonylcarbamoyladenylate + adenosine(37) in tRNA = N(6)-L-threonylcarbamoyladenosine(37) in tRNA + AMP + H(+). Its function is as follows. Required for the formation of a threonylcarbamoyl group on adenosine at position 37 (t(6)A37) in tRNAs that read codons beginning with adenine. Is involved in the transfer of the threonylcarbamoyl moiety of threonylcarbamoyl-AMP (TC-AMP) to the N6 group of A37, together with TsaE and TsaB. TsaD likely plays a direct catalytic role in this reaction. In Streptococcus pyogenes serotype M18 (strain MGAS8232), this protein is tRNA N6-adenosine threonylcarbamoyltransferase.